Reading from the N-terminus, the 357-residue chain is MNWDDTTDAEAAAERLVGAAADGEDQAVEAALRPKDLGEFIGQEKVREQLDLVLRAARARGATADHVLLSGAPGLGKTTLSMIIAAEMEAPIRITSGPAIQHAGDLAAILSSLQEGEVLFLDEIHRMSRPAEEMLYMAMEDFRVDVIVGKGPGATAIPLELPPFTLVGATTRAGLLPPPLRDRFGFTAHMEFYGPAELERVIHRSAGLLDVEIDPTGAAEIAGRSRGTPRIANRLLRRVRDYAQVKADGLITQEIAAAALAVYEVDARGLDRLDRGVLEALLKLFGGGPVGLSTLAVAVGEERETVEEVAEPFLVREGLLARTPRGRVATPAAWAHLGLTPPRPQSSGNGQPDLFGA.

Residues 3 to 193 form a large ATPase domain (RuvB-L) region; that stretch reads WDDTTDAEAA…FGFTAHMEFY (191 aa). ATP-binding positions include Leu32, Arg33, Gly74, Lys77, Thr78, Thr79, 140–142, Arg183, Tyr193, and Arg230; that span reads EDF. Thr78 lines the Mg(2+) pocket. Positions 194-264 are small ATPAse domain (RuvB-S); sequence GPAELERVIH…IAAAALAVYE (71 aa). The tract at residues 267 to 357 is head domain (RuvB-H); that stretch reads ARGLDRLDRG…GNGQPDLFGA (91 aa). DNA contacts are provided by Arg303, Arg322, and Arg327. Positions 337 to 357 are disordered; the sequence is LGLTPPRPQSSGNGQPDLFGA.

Belongs to the RuvB family. Homohexamer. Forms an RuvA(8)-RuvB(12)-Holliday junction (HJ) complex. HJ DNA is sandwiched between 2 RuvA tetramers; dsDNA enters through RuvA and exits via RuvB. An RuvB hexamer assembles on each DNA strand where it exits the tetramer. Each RuvB hexamer is contacted by two RuvA subunits (via domain III) on 2 adjacent RuvB subunits; this complex drives branch migration. In the full resolvosome a probable DNA-RuvA(4)-RuvB(12)-RuvC(2) complex forms which resolves the HJ.

It localises to the cytoplasm. The catalysed reaction is ATP + H2O = ADP + phosphate + H(+). The RuvA-RuvB-RuvC complex processes Holliday junction (HJ) DNA during genetic recombination and DNA repair, while the RuvA-RuvB complex plays an important role in the rescue of blocked DNA replication forks via replication fork reversal (RFR). RuvA specifically binds to HJ cruciform DNA, conferring on it an open structure. The RuvB hexamer acts as an ATP-dependent pump, pulling dsDNA into and through the RuvAB complex. RuvB forms 2 homohexamers on either side of HJ DNA bound by 1 or 2 RuvA tetramers; 4 subunits per hexamer contact DNA at a time. Coordinated motions by a converter formed by DNA-disengaged RuvB subunits stimulates ATP hydrolysis and nucleotide exchange. Immobilization of the converter enables RuvB to convert the ATP-contained energy into a lever motion, pulling 2 nucleotides of DNA out of the RuvA tetramer per ATP hydrolyzed, thus driving DNA branch migration. The RuvB motors rotate together with the DNA substrate, which together with the progressing nucleotide cycle form the mechanistic basis for DNA recombination by continuous HJ branch migration. Branch migration allows RuvC to scan DNA until it finds its consensus sequence, where it cleaves and resolves cruciform DNA. The chain is Holliday junction branch migration complex subunit RuvB from Streptomyces coelicolor (strain ATCC BAA-471 / A3(2) / M145).